A 308-amino-acid polypeptide reads, in one-letter code: MLPPYFLFKEMTDTQYIGRFAPSPSGELHFGSLIAALGSYLQARARQGRWLVRIEDIDPPREVPGAAETILRQLEHYGLHWDGDVLWQSQRHDAYREALAWLHEQGLSYYCTCTRARIQSIGGIYDGHCRVLHHGPDNAAVRIRQQHPVTQFTDQLRGIIHADEKLAREDFIIHRRDGLFAYNLAVVVDDHFQGVTEIVRGADLIEPTVRQISLYQLFGWKVPDYIHLPLALNPQGAKLSKQNHAPALPKGDPRPVLIAALQFLGQQAEAHWQDFSVEQILQSAVKNWRLTAVPESAIVNSTFSNASC.

Residues 19 to 23 (RFAPS) and E55 contribute to the L-glutamate site. Residues 22–32 (PSPSGELHFGS) carry the 'HIGH' region motif. C111, C113, Y125, and C129 together coordinate Zn(2+). Y182 and R200 together coordinate L-glutamate. The 'KMSKS' region motif lies at 238 to 242 (KLSKQ). K241 is a binding site for ATP.

The protein belongs to the class-I aminoacyl-tRNA synthetase family. GluQ subfamily. Zn(2+) serves as cofactor.

Its function is as follows. Catalyzes the tRNA-independent activation of glutamate in presence of ATP and the subsequent transfer of glutamate onto a tRNA(Asp). Glutamate is transferred on the 2-amino-5-(4,5-dihydroxy-2-cyclopenten-1-yl) moiety of the queuosine in the wobble position of the QUC anticodon. The chain is Glutamyl-Q tRNA(Asp) synthetase from Escherichia coli (strain K12 / MC4100 / BW2952).